Here is a 418-residue protein sequence, read N- to C-terminus: Protein-lysine 6-oxidase (418 aa).

The first 20 residues, 1 to 20, serve as a signal peptide directing secretion; the sequence is MRFAWTALLGSLQLCALVRC. Positions 21 to 169 are cleaved as a propeptide — removed by BMP1; that stretch reads APPAASHRQP…NRVEVDGMVG (149 aa). Residues 63 to 84 form a disordered region; it reads YQPQRRRDPGATAPGAANATAP. Low complexity predominate over residues 72-84; it reads GATAPGAANATAP. N-linked (GlcNAc...) asparagine glycans are attached at residues asparagine 80, asparagine 96, and asparagine 143. The interval 130-175 is disordered; it reads TSGAHDAGTSRADNQTAPGEVPTLSNLRPPNRVEVDGMVGDDPYNP. Positions 140 to 157 are enriched in polar residues; that stretch reads RADNQTAPGEVPTLSNLR. Tyrosine 188 bears the Sulfotyrosine mark. Positions 214–418 are lysyl-oxidase like; sequence PDLVPDPYYI…YASGCTISPY (205 aa). 5 disulfide bridges follow: cysteine 239–cysteine 245, cysteine 292–cysteine 341, cysteine 325–cysteine 331, cysteine 352–cysteine 362, and cysteine 399–cysteine 413. Cu cation contacts are provided by histidine 293, histidine 295, and histidine 297. The lysine tyrosylquinone (Lys-Tyr) cross-link spans 321-356; it reads KASFCLEDTSCDYGYHRRFACTAHTQGLSPGCYDTY. A 2',4',5'-topaquinone modification is found at tyrosine 356.

It belongs to the lysyl oxidase family. Interacts with MFAP4. Interacts (via propeptide) with EFEMP2; this interaction is strong and facilitates formation of ternary complexes with ELN during elastic fiber assembly; this interaction limits interaction of EFEMP2 with FBLN5. The cofactor is Cu cation. Lysine tyrosylquinone residue is required as a cofactor. In terms of processing, the lysine tyrosylquinone cross-link (LTQ) is generated by condensation of the epsilon-amino group of a lysine with a topaquinone produced by oxidation of tyrosine. Post-translationally, proteolytically cleaved by BMP1 which removes the propeptide. Also proteolytically cleaved by ADAMTS2 and ADAMTS14, but not by ADAMTS3, at an additional cleavage site downstream of the BMP1 cleavage site. The propeptide plays a role in directing the deposition of this enzyme to elastic fibers, via interaction with tropoelastin. Cleavage by BMP1 to remove the propeptide does not increase enzymatic activity but increases binding to collagen. Cleavage by ADAMTS2 produces a form with reduced collagen-binding activity. Sulfated at Tyr-188 and also at either Tyr-184 or Tyr-185 which enhances binding to collagen.

It is found in the secreted. Its subcellular location is the extracellular space. The enzyme catalyses L-lysyl-[protein] + O2 + H2O = (S)-2-amino-6-oxohexanoyl-[protein] + H2O2 + NH4(+). Its function is as follows. Responsible for the post-translational oxidative deamination of peptidyl lysine residues in precursors to fibrous collagen and elastin. Regulator of Ras expression. May play a role in tumor suppression. Plays a role in the aortic wall architecture. This chain is Protein-lysine 6-oxidase, found in Bos taurus (Bovine).